The following is a 284-amino-acid chain: 2-dehydro-3-deoxyphosphooctonate aldolase (284 aa).

It belongs to the KdsA family.

It localises to the cytoplasm. The enzyme catalyses D-arabinose 5-phosphate + phosphoenolpyruvate + H2O = 3-deoxy-alpha-D-manno-2-octulosonate-8-phosphate + phosphate. The protein operates within carbohydrate biosynthesis; 3-deoxy-D-manno-octulosonate biosynthesis; 3-deoxy-D-manno-octulosonate from D-ribulose 5-phosphate: step 2/3. It participates in bacterial outer membrane biogenesis; lipopolysaccharide biosynthesis. The sequence is that of 2-dehydro-3-deoxyphosphooctonate aldolase (kdsA) from Haemophilus influenzae (strain ATCC 51907 / DSM 11121 / KW20 / Rd).